Consider the following 145-residue polypeptide: Cuticle protein 7 (145 aa).

Residues 41-114 (PVNVATSYHA…VASNALPVGP (74 aa)) enclose the Chitin-binding type R&amp;R domain.

The polypeptide is Cuticle protein 7 (Blaberus craniifer (Death's head cockroach)).